The sequence spans 203 residues: Urease accessory protein UreG (203 aa).

11 to 18 contacts GTP; sequence GPVGSGKT.

It belongs to the SIMIBI class G3E GTPase family. UreG subfamily. Homodimer. UreD, UreF and UreG form a complex that acts as a GTP-hydrolysis-dependent molecular chaperone, activating the urease apoprotein by helping to assemble the nickel containing metallocenter of UreC. The UreE protein probably delivers the nickel.

The protein resides in the cytoplasm. Facilitates the functional incorporation of the urease nickel metallocenter. This process requires GTP hydrolysis, probably effectuated by UreG. In Prochlorococcus marinus (strain MIT 9215), this protein is Urease accessory protein UreG.